The sequence spans 255 residues: Leucyl/phenylalanyl-tRNA--protein transferase (255 aa).

It belongs to the L/F-transferase family.

It localises to the cytoplasm. It carries out the reaction N-terminal L-lysyl-[protein] + L-leucyl-tRNA(Leu) = N-terminal L-leucyl-L-lysyl-[protein] + tRNA(Leu) + H(+). The enzyme catalyses N-terminal L-arginyl-[protein] + L-leucyl-tRNA(Leu) = N-terminal L-leucyl-L-arginyl-[protein] + tRNA(Leu) + H(+). It catalyses the reaction L-phenylalanyl-tRNA(Phe) + an N-terminal L-alpha-aminoacyl-[protein] = an N-terminal L-phenylalanyl-L-alpha-aminoacyl-[protein] + tRNA(Phe). Its function is as follows. Functions in the N-end rule pathway of protein degradation where it conjugates Leu, Phe and, less efficiently, Met from aminoacyl-tRNAs to the N-termini of proteins containing an N-terminal arginine or lysine. The chain is Leucyl/phenylalanyl-tRNA--protein transferase from Burkholderia pseudomallei (strain 668).